The primary structure comprises 247 residues: Geranylgeranylglyceryl phosphate synthase (247 aa).

Mg(2+) is bound by residues aspartate 24 and serine 53. Sn-glycerol 1-phosphate is bound by residues 172–178, 203–204, and 225–226; these read YLEAGSG, GG, and GT.

This sequence belongs to the GGGP/HepGP synthase family. Group II subfamily. Mg(2+) is required as a cofactor.

It is found in the cytoplasm. It catalyses the reaction sn-glycerol 1-phosphate + (2E,6E,10E)-geranylgeranyl diphosphate = sn-3-O-(geranylgeranyl)glycerol 1-phosphate + diphosphate. It functions in the pathway membrane lipid metabolism; glycerophospholipid metabolism. Its function is as follows. Prenyltransferase that catalyzes the transfer of the geranylgeranyl moiety of geranylgeranyl diphosphate (GGPP) to the C3 hydroxyl of sn-glycerol-1-phosphate (G1P). This reaction is the first ether-bond-formation step in the biosynthesis of archaeal membrane lipids. The chain is Geranylgeranylglyceryl phosphate synthase from Cenarchaeum symbiosum (strain A).